A 306-amino-acid chain; its full sequence is Small ribosomal subunit protein uS2 (306 aa).

Serine 2 is subject to N-acetylserine. Laminin-binding regions lie at residues 161 to 180 and 205 to 229; these read IPCNNKGAHSVGLMWWMLAR and RDPEEIEKEEQAAAEKATTKEEYQG. 5 [DE]-W-[ST] repeats span residues 230-232, 245-247, 276-278, 286-288, and 304-306; these read EWT, DWS, and EWS. Positions 242–306 are laminin-binding; the sequence is EVADWSEGVQ…EWTGTTTEWS (65 aa). Residues 261 to 306 form a disordered region; sequence PAERPEIPAAKPAAEDWSSQPASTDDWSAAPTAQASEWTGTTTEWS. A compositionally biased stretch (polar residues) spans 277–306; sequence WSSQPASTDDWSAAPTAQASEWTGTTTEWS.

It belongs to the universal ribosomal protein uS2 family. As to quaternary structure, monomer (37LRP) and homodimer (67LR). Component of the small ribosomal subunit. Mature ribosomes consist of a small (40S) and a large (60S) subunit. The 40S subunit contains about 33 different proteins and 1 molecule of RNA (18S). The 60S subunit contains about 49 different proteins and 3 molecules of RNA (28S, 5.8S and 5S). Interacts with rps21. Interacts with several laminins including at least lamb1. Interacts with mdk. Acylated. Acylation may be a prerequisite for conversion of the monomeric 37 kDa laminin receptor precursor (37LRP) to the mature dimeric 67 kDa laminin receptor (67LR), and may provide a mechanism for membrane association. Post-translationally, cleaved by stromelysin-3 (ST3) at the cell surface. Cleavage by stromelysin-3 may be a mechanism to alter cell-extracellular matrix interactions.

The protein localises to the cell membrane. It is found in the cytoplasm. The protein resides in the nucleus. Required for the assembly and/or stability of the 40S ribosomal subunit. Required for the processing of the 20S rRNA-precursor to mature 18S rRNA in a late step of the maturation of 40S ribosomal subunits. Also functions as a cell surface receptor for laminin. Plays a role in cell adhesion to the basement membrane and in the consequent activation of signaling transduction pathways. May play a role in cell fate determination and tissue morphogenesis. The sequence is that of Small ribosomal subunit protein uS2 (rpsa) from Xenopus tropicalis (Western clawed frog).